The primary structure comprises 104 residues: L-rhamnose mutarotase (104 aa).

Tyrosine 18 lines the substrate pocket. Histidine 22 serves as the catalytic Proton donor. Residues tyrosine 41 and 76–77 (WW) each bind substrate.

Belongs to the rhamnose mutarotase family. As to quaternary structure, homodimer.

The protein resides in the cytoplasm. It catalyses the reaction alpha-L-rhamnose = beta-L-rhamnose. The protein operates within carbohydrate metabolism; L-rhamnose metabolism. In terms of biological role, involved in the anomeric conversion of L-rhamnose. This chain is L-rhamnose mutarotase, found in Salmonella agona (strain SL483).